Consider the following 184-residue polypeptide: MDLTGKLLIAMPGMGDPRFERSVIFLCSHGEDGAMGLIVNKPADLNVSTLLEQLEIPSSSAAAARAPVRLGGPVEMARGFVLHSPDYAGKLQSLKVSDGFVMTATLDILEDIARDNGPARAALMLGYSGWGPGQLEAEIGDNGWLTADADPDIVFGSRDDGKWEAALKLLGIDALLLSASAGHA.

It belongs to the UPF0301 (AlgH) family.

In Ruegeria pomeroyi (strain ATCC 700808 / DSM 15171 / DSS-3) (Silicibacter pomeroyi), this protein is UPF0301 protein SPO0296.